Reading from the N-terminus, the 177-residue chain is Transmembrane protein 196 (177 aa).

Helical transmembrane passes span 11-31 (LLVLSVLEIGLGLSSVAVGAV), 47-67 (SSPVWSGACFLICGVCGIFCA), 73-93 (LIMILFSACCICGLIGGILNI), and 106-126 (LYSLYLASMSLACIGISGCTI). Residues 152 to 162 (HSHEMTEKDTE) are compositionally biased toward basic and acidic residues. The segment at 152–177 (HSHEMTEKDTENITNGGGPLALNGRV) is disordered.

It localises to the cytoplasm. The protein resides in the membrane. This Xenopus tropicalis (Western clawed frog) protein is Transmembrane protein 196 (tmem196).